The primary structure comprises 332 residues: Ferrochelatase (332 aa).

Residues H201 and E283 each contribute to the Fe cation site.

It belongs to the ferrochelatase family.

It localises to the cytoplasm. The enzyme catalyses heme b + 2 H(+) = protoporphyrin IX + Fe(2+). It participates in porphyrin-containing compound metabolism; protoheme biosynthesis; protoheme from protoporphyrin-IX: step 1/1. In terms of biological role, catalyzes the ferrous insertion into protoporphyrin IX. This Francisella tularensis subsp. holarctica (strain FTNF002-00 / FTA) protein is Ferrochelatase.